The sequence spans 80 residues: U20-ctenitoxin-Pn1a (80 aa).

7 disulfide bridges follow: cysteine 3–cysteine 20, cysteine 10–cysteine 26, cysteine 17–cysteine 52, cysteine 19–cysteine 40, cysteine 28–cysteine 38, cysteine 58–cysteine 71, and cysteine 75–cysteine 80.

In terms of tissue distribution, expressed by the venom gland.

Its subcellular location is the secreted. In terms of biological role, omega-agatoxin are antagonists of voltage-gated calcium channels (Cav). Induces rapid general flaccid paralysis followed by death when injected into the cerebral ventricle of mice at dose levels of 3 ug per mouse. This is U20-ctenitoxin-Pn1a from Phoneutria nigriventer (Brazilian armed spider).